The primary structure comprises 455 residues: Protein YmfN (455 aa).

Belongs to the phage terminase family.

The chain is Protein YmfN (ymfN) from Escherichia coli (strain K12).